The following is a 150-amino-acid chain: Group IIC secretory phospholipase A2 (150 aa).

Positions 1-20 (MKGIAVFLVFIFCWTTSTLS) are cleaved as a signal peptide. 8 disulfide bridges follow: C46-C143, C48-C64, C63-C121, C69-C150, C70-C114, C79-C107, C97-C112, and C99-C105. Residues Y47, G49, and G51 each contribute to the Ca(2+) site. H67 is a catalytic residue. D68 provides a ligand contact to Ca(2+). N-linked (GlcNAc...) asparagine glycosylation occurs at N92. D115 is an active-site residue.

The protein belongs to the phospholipase A2 family. Requires Ca(2+) as cofactor.

Its subcellular location is the secreted. It catalyses the reaction a 1,2-diacyl-sn-glycero-3-phosphocholine + H2O = a 1-acyl-sn-glycero-3-phosphocholine + a fatty acid + H(+). Its function is as follows. PA2 catalyzes the calcium-dependent hydrolysis of the 2-acyl groups in 3-sn-phosphoglycerides. In Rattus norvegicus (Rat), this protein is Group IIC secretory phospholipase A2 (Pla2g2c).